A 267-amino-acid chain; its full sequence is PHD finger protein ALFIN-LIKE 7 (267 aa).

Positions 162-207 (TKVSNGSSKSNKSNPKPSKQSNSNSKPAKPPQPKDEEDSGPEGAED) are disordered. Over residues 165–188 (SNGSSKSNKSNPKPSKQSNSNSKP) the composition is skewed to low complexity. Over residues 196–207 (DEEDSGPEGAED) the composition is skewed to acidic residues. The PHD-type zinc finger occupies 211–263 (AYMCGACGETYANGEFWICCDVCEKWFHGKCVRITPAKAEHIKQYKCPGCSSK).

Belongs to the Alfin family. As to quaternary structure, interacts with H3K4me3 and to a lesser extent with H3K4me2.

It localises to the nucleus. Histone-binding component that specifically recognizes H3 tails trimethylated on 'Lys-4' (H3K4me3), which mark transcription start sites of virtually all active genes. The protein is PHD finger protein ALFIN-LIKE 7 of Oryza sativa subsp. indica (Rice).